The following is a 372-amino-acid chain: PqqA peptide cyclase (372 aa).

The Radical SAM core domain occupies 4–219; the sequence is APPPLSVLLE…VDTARRELGD (216 aa). Residues cysteine 18, cysteine 22, and cysteine 25 each coordinate [4Fe-4S] cluster. Residues 342–372 are disordered; it reads ATAEREAAAPAPEFIYRRPERPAPATADTLE.

The protein belongs to the radical SAM superfamily. PqqE family. In terms of assembly, interacts with PqqD. The interaction is necessary for activity of PqqE. The cofactor is [4Fe-4S] cluster.

It carries out the reaction [PQQ precursor protein] + S-adenosyl-L-methionine = E-Y cross-linked-[PQQ precursor protein] + 5'-deoxyadenosine + L-methionine + H(+). Its pathway is cofactor biosynthesis; pyrroloquinoline quinone biosynthesis. Its function is as follows. Catalyzes the cross-linking of a glutamate residue and a tyrosine residue in the PqqA protein as part of the biosynthesis of pyrroloquinoline quinone (PQQ). This Xanthomonas oryzae pv. oryzae (strain MAFF 311018) protein is PqqA peptide cyclase.